Consider the following 1233-residue polypeptide: Glutamate receptor ionotropic, NMDA 2C (1233 aa).

The N-terminal stretch at Met1–Ala19 is a signal peptide. The Extracellular segment spans residues Gly20–Ala554. N-linked (GlcNAc...) asparagine glycans are attached at residues Asn70 and Asn73. Cys82 and Cys317 form a disulfide bridge. Asn337 and Asn438 each carry an N-linked (GlcNAc...) asparagine glycan. 2 disulfide bridges follow: Cys426-Cys453 and Cys433-Cys454. Ser509, Thr511, and Arg516 together coordinate L-glutamate. A glycan (N-linked (GlcNAc...) asparagine) is linked at Asn539. A helical transmembrane segment spans residues Val555–Glu575. Over Tyr576–Thr598 the chain is Cytoplasmic. The segment at residues Ile599–Phe611 is an intramembrane region (discontinuously helical). Positions Lys601–Pro620 are pore-forming. Residues Asn612–Lys626 lie on the Cytoplasmic side of the membrane. A helical membrane pass occupies residues Ile627–Thr644. Over Ala645–Asp813 the chain is Extracellular. A glycan (N-linked (GlcNAc...) asparagine) is linked at Asn685. Ser687, Thr688, and Asp729 together coordinate L-glutamate. A disulfide bond links Cys743 and Cys798. Residues Asn814 to Glu836 traverse the membrane as a helical segment. The Cytoplasmic portion of the chain corresponds to His837–Val1233. Phosphoserine occurs at positions 875, 881, and 912. Positions Ile920–Val994 are disordered. Pro residues-rich tracts occupy residues Ala929–Ser956 and Pro975–Pro987. The short motif at Ser1231–Val1233 is the PDZ-binding element.

Belongs to the glutamate-gated ion channel (TC 1.A.10.1) family. NR2C/GRIN2C subfamily. In terms of assembly, heterotetramer. Forms heterotetrameric channels composed of two GluN1/zeta subunits (GRIN1), and two identical GluN2/epsilon subunits (GRIN2A, GRIN2B, GRIN2C or GRIN2D) or GluN3 subunits (GRIN3A or GRIN3B) (in vitro). In vivo, the subunit composition may depend on the expression levels of the different subunits. Interacts with PDZ domains of PATJ and DLG4. Interacts (via PDZ-binding motif) with SNX27 (via PDZ domain); the interaction is required for recycling to the plasma membrane when endocytosed and prevent degradation in lysosomes. As to expression, mainly expressed in brain with predominant expression is in the cerebellum, also present in the hippocampus, amygdala, caudate nucleus, corpus callosum, subthalamic nuclei and thalamus. Detected in the heart, skeletal muscle and pancreas.

It localises to the cell membrane. The protein localises to the postsynaptic cell membrane. It catalyses the reaction Ca(2+)(in) = Ca(2+)(out). The enzyme catalyses Na(+)(in) = Na(+)(out). It carries out the reaction K(+)(in) = K(+)(out). In terms of biological role, component of N-methyl-D-aspartate (NMDA) receptors (NMDARs) that function as heterotetrameric, ligand-gated cation channels with high calcium permeability and voltage-dependent block by Mg(2+). Participates in synaptic plasticity for learning and memory formation by contributing to the slow phase of excitatory postsynaptic current and long-term synaptic potentiation. Channel activation requires binding of the neurotransmitter L-glutamate to the GluN2 subunit, glycine or D-serine binding to the GluN1 subunit, plus membrane depolarization to eliminate channel inhibition by Mg(2+). NMDARs mediate simultaneously the potasium efflux and the influx of calcium and sodium. Each GluN2 subunit confers differential attributes to channel properties, including activation, deactivation and desensitization kinetics, pH sensitivity, Ca2(+) permeability, and binding to allosteric modulators. The chain is Glutamate receptor ionotropic, NMDA 2C from Homo sapiens (Human).